The following is a 676-amino-acid chain: Mucin-1 (676 aa).

The first 25 residues, 1-25 (MTPGIRAPFLLTLLLALVTDPNSVA), serve as a signal peptide directing secretion. The interval 25-387 (ALSQDTSSSS…VHNGSLVPTT (363 aa)) is disordered. At 26-582 (LSQDTSSSST…QSWPGVPGWG (557 aa)) the chain is on the extracellular side. Tandem repeats lie at residues 40 to 59 (PVHS…SATT), 60 to 79 (PGHS…SATT), 80 to 99 (PGHS…SATT), 100 to 119 (PVHS…SATT), 120 to 139 (PVHS…SATT), 140 to 159 (PVHS…SATT), 160 to 179 (PVHS…SATT), 180 to 199 (PVHS…SATT), 200 to 219 (PVHS…SATT), 220 to 239 (PVHS…SATT), 240 to 259 (PVHS…SATT), 260 to 279 (PVHS…LATT), and 280 to 299 (PVHS…SATT). The segment at 40–314 (PVHSGSSAPA…SSMQTTEAIS (275 aa)) is 13 X approximate tandem repeats of P-V-H-S-G-S-S-A-P-P-T-S-S-A-V-N-S-A-T-T. O-linked (GalNAc...) serine glycans are attached at residues Ser43, Ser45, and Ser46. Thr50 is a glycosylation site (O-linked (GalNAc...) threonine). O-linked (GalNAc...) serine glycans are attached at residues Ser51, Ser52, and Ser56. Residues Thr58 and Thr59 are each glycosylated (O-linked (GalNAc...) threonine). 10 N-linked (GlcNAc...) asparagine glycosylation sites follow: Asn291, Asn323, Asn350, Asn380, Asn400, Asn413, Asn435, Asn479, Asn496, and Asn536. Polar residues predominate over residues 404–420 (TMATTTPVGNGTQSSVP). Positions 404–434 (TMATTTPVGNGTQSSVPSRHPVTPTPPAVSS) are disordered. The region spanning 463–570 (GVSFFLLSFH…INVGEMQFPS (108 aa)) is the SEA domain. A helical transmembrane segment spans residues 583 to 603 (IALLVLVCILVALAIVYLIAL). Residues 604 to 676 (AVCQCRRKNY…PVVATTSANL (73 aa)) lie on the Cytoplasmic side of the membrane. 2 S-palmitoyl cysteine lipidation sites follow: Cys606 and Cys608. The interval 614 to 650 (GQLDIFPIQDSYHPMSEYPTYHTHGRYVPPGSTKRSP) is interaction with P53. Residue Tyr625 is modified to Phosphotyrosine; by PDGFR. The Interaction with GRB2 signature appears at 625–628 (YHPM). Tyr634 is subject to Phosphotyrosine. The interval 636-659 (THGRYVPPGSTKRSPYEEVSAGNG) is disordered. Tyr640 is subject to Phosphotyrosine; by PDGFR. Residues 645–652 (STKRSPYE) are required for interaction with GSK3B. Thr646 bears the Phosphothreonine; by PKC/PRKCD mark. Ser649 bears the Phosphoserine; by GSK3-beta mark. Tyr651 carries the phosphotyrosine; by CSK, EGFR and SRC modification. The Interaction with SRC and ESR1 motif lies at 651-654 (YEEV). A required for interaction with beta- and gamma-catenins region spans residues 655 to 662 (SAGNGSSL). Tyr664 is modified (phosphotyrosine). The Required for interaction with AP1S2 signature appears at 664–667 (YTNP).

In terms of assembly, the alpha subunit forms a tight, non-covalent heterodimeric complex with the proteolytically-released beta-subunit. Binds directly the SH2 domain of GRB2, and forms a MUC1/GRB2/SOS1 complex involved in RAS signaling. The cytoplasmic tail (MUC1CT) interacts with several proteins such as SRC, CTNNB1 and ERBs. Interaction with the SH2 domain of CSK decreases interaction with GSK3B. Interacts with CTNNB1/beta-catenin and JUP/gamma-catenin and promotes cell adhesion. Interaction with JUP/gamma-catenin is induced by heregulin. Binds PRKCD, ERBB2, ERBB3 and ERBB4. Heregulin (HRG) stimulates the interaction with ERBB2 and, to a much lesser extent, the interaction with ERBB3 and ERBB4. Interacts with P53 in response to DNA damage. Interacts with KLF4. Interacts with estrogen receptor alpha/ESR1, through its DNA-binding domain, and stimulates its transcription activity. Binds ADAM17. Probably both N- and O-glycosylated (in repeat region). In terms of processing, proteolytic cleavage in the SEA domain occurs in the endoplasmic reticulum by an autoproteolytic mechanism and requires the full-length SEA domain as well as requiring a Ser, Thr or Cys residue at the P + 1 site. Ectodomain shedding is mediated by ADAM17 in uterine epithelial cells. Post-translationally, dual palmitoylation on cysteine residues in the CQC motif is required for recycling from endosomes back to the plasma membrane. Phosphorylated on tyrosines and serine residues in the C-terminal. Phosphorylation on tyrosines in the C-terminal increases the nuclear location of MUC1 and beta-catenin. Phosphorylation by PKC delta induces binding of MUC1 to beta-catenin/CTNNB1 and thus decreases the formation of the beta-catenin/E-cadherin complex. Src-mediated phosphorylation inhibits interaction with GSK3B. Csk- or Src- or EGFR-mediated phosphorylation on Tyr-651 increases binding to beta-catenin/CTNNB1. GSK3B-mediated phosphorylation on Ser-649 decreases this interaction but restores the formation of the beta-cadherin/E-cadherin complex. On T-cell receptor activation, phosphorylated by LCK. PDGFR-mediated phosphorylation increases nuclear colocalization of MUC1CT and CTNNB1.

It is found in the apical cell membrane. The protein resides in the cell membrane. It localises to the cytoplasm. The protein localises to the nucleus. Functionally, the alpha subunit has cell adhesive properties. Can act both as an adhesion and an anti-adhesion protein. May provide a protective layer on epithelial cells against bacterial and enzyme attack. Its function is as follows. The beta subunit contains a C-terminal domain which is involved in cell signaling, through phosphorylations and protein-protein interactions. Modulates signaling in ERK, Src and NF-kappaB pathways. In activated T-cells, influences directly or indirectly the Ras/MAPK pathway. Promotes tumor progression. Regulates P53-mediated transcription and determines cell fate in the genotoxic stress response. Binds, together with KLF4, the PE21 promoter element of P53 and represses P53 activity. The sequence is that of Mucin-1 (MUC1) from Mesocricetus auratus (Golden hamster).